A 378-amino-acid polypeptide reads, in one-letter code: Chaperone protein DnaJ (378 aa).

In terms of domain architecture, J spans 4–68; it reads DFYEILGVSR…ETRARYDRFG (65 aa). The CR-type zinc finger occupies 136-218; it reads GGEKEIRIPH…CGGAGRKQET (83 aa). Cys149, Cys152, Cys166, Cys169, Cys192, Cys195, Cys206, and Cys209 together coordinate Zn(2+). 4 CXXCXGXG motif repeats span residues 149 to 156, 166 to 173, 192 to 199, and 206 to 213; these read CKTCSGSG, CGTCNGTG, CPTCNGEG, and CESCGGAG.

Belongs to the DnaJ family. In terms of assembly, homodimer. Zn(2+) serves as cofactor.

It localises to the cytoplasm. Participates actively in the response to hyperosmotic and heat shock by preventing the aggregation of stress-denatured proteins and by disaggregating proteins, also in an autonomous, DnaK-independent fashion. Unfolded proteins bind initially to DnaJ; upon interaction with the DnaJ-bound protein, DnaK hydrolyzes its bound ATP, resulting in the formation of a stable complex. GrpE releases ADP from DnaK; ATP binding to DnaK triggers the release of the substrate protein, thus completing the reaction cycle. Several rounds of ATP-dependent interactions between DnaJ, DnaK and GrpE are required for fully efficient folding. Also involved, together with DnaK and GrpE, in the DNA replication of plasmids through activation of initiation proteins. The polypeptide is Chaperone protein DnaJ (Picosynechococcus sp. (strain ATCC 27264 / PCC 7002 / PR-6) (Agmenellum quadruplicatum)).